A 1405-amino-acid chain; its full sequence is DNA-directed RNA polymerase subunit beta' (1405 aa).

Cysteine 70, cysteine 72, cysteine 85, and cysteine 88 together coordinate Zn(2+). Residues aspartate 460, aspartate 462, and aspartate 464 each contribute to the Mg(2+) site. The Zn(2+) site is built by cysteine 814, cysteine 888, cysteine 895, and cysteine 898.

The protein belongs to the RNA polymerase beta' chain family. As to quaternary structure, the RNAP catalytic core consists of 2 alpha, 1 beta, 1 beta' and 1 omega subunit. When a sigma factor is associated with the core the holoenzyme is formed, which can initiate transcription. Mg(2+) serves as cofactor. Zn(2+) is required as a cofactor.

The catalysed reaction is RNA(n) + a ribonucleoside 5'-triphosphate = RNA(n+1) + diphosphate. Its function is as follows. DNA-dependent RNA polymerase catalyzes the transcription of DNA into RNA using the four ribonucleoside triphosphates as substrates. This Shewanella woodyi (strain ATCC 51908 / MS32) protein is DNA-directed RNA polymerase subunit beta'.